A 258-amino-acid polypeptide reads, in one-letter code: UPF0246 protein YaaA (258 aa).

The protein belongs to the UPF0246 family.

The sequence is that of UPF0246 protein YaaA from Shigella dysenteriae serotype 1 (strain Sd197).